The following is a 720-amino-acid chain: Methionine--tRNA ligase (720 aa).

Positions 27–37 (PYANGQIHIGH) match the 'HIGH' region motif. The Zn(2+) site is built by C158, C161, C171, and C174. The short motif at 348–352 (KMSKS) is the 'KMSKS' region element. K351 contributes to the ATP binding site. Residues 614 to 720 (DFAKVDLRIA…SGAKPGMRVK (107 aa)) form the tRNA-binding domain.

Belongs to the class-I aminoacyl-tRNA synthetase family. MetG type 1 subfamily. In terms of assembly, homodimer. Zn(2+) is required as a cofactor.

It localises to the cytoplasm. The catalysed reaction is tRNA(Met) + L-methionine + ATP = L-methionyl-tRNA(Met) + AMP + diphosphate. In terms of biological role, is required not only for elongation of protein synthesis but also for the initiation of all mRNA translation through initiator tRNA(fMet) aminoacylation. This is Methionine--tRNA ligase from Burkholderia ambifaria (strain MC40-6).